The sequence spans 501 residues: L-arabinose isomerase (501 aa).

Residues Glu-306, Glu-333, His-350, and His-450 each contribute to the Mn(2+) site.

The protein belongs to the arabinose isomerase family. In terms of assembly, homohexamer. Mn(2+) is required as a cofactor.

The catalysed reaction is beta-L-arabinopyranose = L-ribulose. It functions in the pathway carbohydrate degradation; L-arabinose degradation via L-ribulose; D-xylulose 5-phosphate from L-arabinose (bacterial route): step 1/3. Its function is as follows. Catalyzes the conversion of L-arabinose to L-ribulose. This is L-arabinose isomerase from Pectobacterium atrosepticum (strain SCRI 1043 / ATCC BAA-672) (Erwinia carotovora subsp. atroseptica).